A 1147-amino-acid polypeptide reads, in one-letter code: Sterol regulatory element-binding protein 1 (1147 aa).

Residues 1–60 (MDEPPFSEAALEQALGEPCDLDAALLTDIEDMLQLINNQDSDFPGLFDPPYAGSGAGGTD) form a transcriptional activation (acidic) region. Over 1–487 (MDEPPFSEAA…HSRGMLDRSR (487 aa)) the chain is Cytoplasmic. Positions 27–35 (TDIEDMLQL) match the 9aaTAD motif. The tract at residues 39–193 (QDSDFPGLFD…PLPGLPLASP (155 aa)) is disordered. Low complexity-rich tracts occupy residues 62–71 (ASPDTSSPGS) and 78–95 (TLSS…AAPS). The segment covering 96 to 105 (PLSPPQPAPT) has biased composition (pro residues). A phosphoserine mark is found at Ser-98 and Ser-117. The segment covering 170-190 (GGFSTGSPPGNTQQPLPGLPL) has biased composition (low complexity). The interaction with LMNA stretch occupies residues 234-497 (QQVPVLLQPH…LALCTLVFLC (264 aa)). One can recognise a bHLH domain in the interval 323–373 (EKRTAHNAIEKRYRSSINDKIIELKDLVVGTEAKLNKSAVLRKAIDYIRFL). 2 positions are modified to phosphoserine; by SIK1: Ser-337 and Ser-338. Residues 373-394 (LQHSNQKLKQENLSLRTAVHKS) form a leucine-zipper region. Ser-396 bears the Phosphoserine; by AMPK mark. Ser-402 is modified (phosphoserine; by SIK1). Positions 421 to 479 (VEDTLTPPPSDAGSPFQSSPLSLGSRGSGSGGSGSDSEPDSPVFEDSKAKPEQRPSLHS) are disordered. At Ser-457 the chain carries Phosphoserine. Over residues 465 to 479 (EDSKAKPEQRPSLHS) the composition is skewed to basic and acidic residues. The helical transmembrane segment at 488 to 508 (LALCTLVFLCLSCNPLASLLG) threads the bilayer. Residues 509–547 (ARGLPSPSDTTSVYHSPGRNVLGTESRDGPGWAQWLLPP) lie on the Lumenal side of the membrane. A helical membrane pass occupies residues 548 to 568 (VVWLLNGLLVLVSLVLLFVYG). At 569 to 1147 (EPVTRPHSGP…LGGGTTVTSS (579 aa)) the chain is on the cytoplasmic side. The residue at position 1060 (Ser-1060) is a Phosphoserine.

Belongs to the SREBP family. As to quaternary structure, forms a tight complex with SCAP, the SCAP-SREBP complex, in the endoplasmic reticulum membrane and the Golgi apparatus. Interacts with PAQR3; the interaction anchors the SCAP-SREBP complex to the Golgi apparatus in low cholesterol conditions. Efficient DNA binding of the soluble transcription factor fragment requires dimerization with another bHLH protein. Interacts with CEBPA, the interaction produces a transcriptional synergy. Interacts with LMNA. In terms of processing, processed in the Golgi apparatus, releasing the protein from the membrane. At low cholesterol the SCAP-SREBP complex is recruited into COPII vesicles for export from the endoplasmic reticulum. In the Golgi, complex SREBPs are cleaved sequentially by site-1 (MBTPS1, S1P) and site-2 (MBTPS2, S2P) protease. The first cleavage by site-1 protease occurs within the luminal loop, the second cleavage by site-2 protease occurs within the first transmembrane domain, releasing the transcription factor from the Golgi membrane. Post-translationally, phosphorylated by AMPK, leading to suppress protein processing and nuclear translocation, and repress target gene expression. Phosphorylation at Ser-402 by SIK1 represses activity possibly by inhibiting DNA-binding. SCAP-free SREBF1 is ubiquitinated by the BCR(ARMC5) complex, leading to its degradation. In terms of processing, ubiquitinated; the nuclear form has a rapid turnover and is rapidly ubiquitinated and degraded by the proteasome in the nucleus. As to expression, expressed in a wide variety of tissues, most abundant in liver and adrenal gland. In fetal tissues lung and liver shows highest expression. Predominates in hepatoma cell lines. Also expressed in kidney, brain, white fat, and muscle. In terms of tissue distribution, predominantly expressed in liver and adipose tissues. Also expressed in kidney, brain, white fat, and muscle.

Its subcellular location is the endoplasmic reticulum membrane. The protein resides in the golgi apparatus membrane. It localises to the cytoplasmic vesicle. The protein localises to the COPII-coated vesicle membrane. It is found in the nucleus. With respect to regulation, activation by cleavage is down-regulated upon activation of SIRT3-dependent PRKAA1/AMPK-alpha signaling cascade which leads to inhibition of ATP-consuming lipogenesis to restore cellular energy balance. In terms of biological role, precursor of the transcription factor form (Processed sterol regulatory element-binding protein 1), which is embedded in the endoplasmic reticulum membrane. Low sterol concentrations promote processing of this form, releasing the transcription factor form that translocates into the nucleus and activates transcription of genes involved in cholesterol biosynthesis and lipid homeostasis. Key transcription factor that regulates expression of genes involved in cholesterol biosynthesis and lipid homeostasis. Binds to the sterol regulatory element 1 (SRE-1) (5'-ATCACCCCAC-3'). Has dual sequence specificity binding to both an E-box motif (5'-ATCACGTGA-3') and to SRE-1 (5'-ATCACCCCAC-3'). Regulates the promoters of genes involved in cholesterol biosynthesis and the LDL receptor (LDLR) pathway of sterol regulation. Its function is as follows. Isoform expressed only in select tissues, which has higher transcriptional activity compared to SREBP-1C. Able to stimulate both lipogenic and cholesterogenic gene expression. Has a role in the nutritional regulation of fatty acids and triglycerides in lipogenic organs such as the liver. Required for innate immune response in macrophages by regulating lipid metabolism. Functionally, predominant isoform expressed in most tissues, which has weaker transcriptional activity compared to isoform SREBP-1A. Primarily controls expression of lipogenic gene. Strongly activates global lipid synthesis in rapidly growing cells. In terms of biological role, the absence of Golgi proteolytic processing requirement makes this isoform constitutively active in transactivation of lipogenic gene promoters. The protein is Sterol regulatory element-binding protein 1 of Homo sapiens (Human).